The following is a 583-amino-acid chain: Glycine--tRNA ligase (583 aa).

Substrate contacts are provided by R100 and E166. ATP is bound by residues 198-200 (RNE), 208-213 (VRLREF), 328-329 (EV), and 443-446 (GTDR). Residue 213 to 217 (FTIME) coordinates substrate. Residue 439-443 (EPSFG) coordinates substrate.

This sequence belongs to the class-II aminoacyl-tRNA synthetase family.

The protein resides in the cytoplasm. It carries out the reaction tRNA(Gly) + glycine + ATP = glycyl-tRNA(Gly) + AMP + diphosphate. In terms of biological role, catalyzes the attachment of glycine to tRNA(Gly). This chain is Glycine--tRNA ligase, found in Aeropyrum pernix (strain ATCC 700893 / DSM 11879 / JCM 9820 / NBRC 100138 / K1).